The primary structure comprises 355 residues: Biotin synthase (355 aa).

The 225-residue stretch at 51–275 (NTVKVNYLVN…VCPDKEIRIA (225 aa)) folds into the Radical SAM core domain. The [4Fe-4S] cluster site is built by Cys66, Cys70, and Cys73. Residues Cys110, Cys143, Cys203, and Arg273 each coordinate [2Fe-2S] cluster.

This sequence belongs to the radical SAM superfamily. Biotin synthase family. As to quaternary structure, homodimer. Requires [4Fe-4S] cluster as cofactor. It depends on [2Fe-2S] cluster as a cofactor.

The enzyme catalyses (4R,5S)-dethiobiotin + (sulfur carrier)-SH + 2 reduced [2Fe-2S]-[ferredoxin] + 2 S-adenosyl-L-methionine = (sulfur carrier)-H + biotin + 2 5'-deoxyadenosine + 2 L-methionine + 2 oxidized [2Fe-2S]-[ferredoxin]. It functions in the pathway cofactor biosynthesis; biotin biosynthesis; biotin from 7,8-diaminononanoate: step 2/2. Catalyzes the conversion of dethiobiotin (DTB) to biotin by the insertion of a sulfur atom into dethiobiotin via a radical-based mechanism. The protein is Biotin synthase of Saccharopolyspora erythraea (strain ATCC 11635 / DSM 40517 / JCM 4748 / NBRC 13426 / NCIMB 8594 / NRRL 2338).